The chain runs to 274 residues: MQFSKMHGLGNDFMVIDGVTQNVYLTEEVIRKLADRHRGVGFDQLLLVEPPYDPELDFHYRIFNADGSEVAQCGNGARCFARFVTLKGLTNKQDIHVSTAKGKMVLTLKDEEKVRVNMGEPIWEPAQVPFTANKFEKNYILRTDLQTVLCGVVSMGNPHCVLQVEDINLTPVNELGPLLENHERFPERANIGFMQVVNRNHIKLRVFERGAGETQACGSGACGAVAVGIMQGVLDNNVQVDLSGGSLQIEWEGVGHPLYMTGDATHIYDGFIKL.

Positions 11, 44, and 64 each coordinate substrate. Catalysis depends on Cys73, which acts as the Proton donor. Residues 74 to 75 (GN), Asn157, Asn190, and 208 to 209 (ER) contribute to the substrate site. The active-site Proton acceptor is Cys217. 218 to 219 (GS) provides a ligand contact to substrate.

Belongs to the diaminopimelate epimerase family. As to quaternary structure, homodimer.

Its subcellular location is the cytoplasm. It catalyses the reaction (2S,6S)-2,6-diaminopimelate = meso-2,6-diaminopimelate. The protein operates within amino-acid biosynthesis; L-lysine biosynthesis via DAP pathway; DL-2,6-diaminopimelate from LL-2,6-diaminopimelate: step 1/1. Functionally, catalyzes the stereoinversion of LL-2,6-diaminopimelate (L,L-DAP) to meso-diaminopimelate (meso-DAP), a precursor of L-lysine and an essential component of the bacterial peptidoglycan. The polypeptide is Diaminopimelate epimerase (Actinobacillus pleuropneumoniae serotype 3 (strain JL03)).